The following is a 277-amino-acid chain: Phosphonoacetaldehyde hydrolase-like protein (277 aa).

The protein belongs to the HAD-like hydrolase superfamily. PhnX family.

In Syntrophobacter fumaroxidans (strain DSM 10017 / MPOB), this protein is Phosphonoacetaldehyde hydrolase-like protein (phnX2).